The following is a 989-amino-acid chain: ATP-dependent 6-phosphofructokinase subunit alpha (989 aa).

Residues 1–585 (MPEPSISALS…SYESFLSVSK (585 aa)) are N-terminal catalytic PFK domain 1. ATP contacts are provided by residues glycine 220, 283–284 (RS), and 313–316 (GDGS). Aspartate 314 is a binding site for Mg(2+). Beta-D-fructose 6-phosphate contacts are provided by residues 359–361 (SID), arginine 396, 403–405 (MGR), glutamate 460, arginine 487, and 493–496 (HVQR). Aspartate 361 functions as the Proton acceptor in the catalytic mechanism. Residues 586 to 599 (YDDGSYLVPESSRL) are interdomain linker. Residues 600–989 (NIAIIHVGAP…LSGRLSIRTT (390 aa)) form a C-terminal regulatory PFK domain 2 region. Residues arginine 670, 727–731 (TVSNN), arginine 765, 772–774 (QGG), glutamate 832, arginine 858, 864–867 (HVQQ), and arginine 963 each bind beta-D-fructose 2,6-bisphosphate.

This sequence belongs to the phosphofructokinase type A (PFKA) family. ATP-dependent PFK group I subfamily. Eukaryotic two domain clade 'E' sub-subfamily. In terms of assembly, heterododecamer of 4 alpha, 4 beta and 4 gamma chains. The gamma chain bridges the N-terminal halves of the alpha and beta subunits. It depends on Mg(2+) as a cofactor.

The protein resides in the cytoplasm. It catalyses the reaction beta-D-fructose 6-phosphate + ATP = beta-D-fructose 1,6-bisphosphate + ADP + H(+). It functions in the pathway carbohydrate degradation; glycolysis; D-glyceraldehyde 3-phosphate and glycerone phosphate from D-glucose: step 3/4. Allosterically activated by ADP, AMP, or fructose 2,6-bisphosphate, and allosterically inhibited by ATP or citrate. Catalyzes the phosphorylation of D-fructose 6-phosphate to fructose 1,6-bisphosphate by ATP, the first committing step of glycolysis. Involved in the modulation of glucose-induced microautophagy of peroxisomes independent of its ability to metabolize glucose intermediates. In Komagataella phaffii (strain GS115 / ATCC 20864) (Yeast), this protein is ATP-dependent 6-phosphofructokinase subunit alpha (PFK1).